The sequence spans 364 residues: Succinyl-diaminopimelate desuccinylase (364 aa).

His66 contacts Zn(2+). Asp68 is an active-site residue. Asp97 contributes to the Zn(2+) binding site. Glu127 acts as the Proton acceptor in catalysis. Positions 128, 156, and 341 each coordinate Zn(2+).

The protein belongs to the peptidase M20A family. DapE subfamily. As to quaternary structure, homodimer. Requires Zn(2+) as cofactor. It depends on Co(2+) as a cofactor.

It catalyses the reaction N-succinyl-(2S,6S)-2,6-diaminopimelate + H2O = (2S,6S)-2,6-diaminopimelate + succinate. Its pathway is amino-acid biosynthesis; L-lysine biosynthesis via DAP pathway; LL-2,6-diaminopimelate from (S)-tetrahydrodipicolinate (succinylase route): step 3/3. Catalyzes the hydrolysis of N-succinyl-L,L-diaminopimelic acid (SDAP), forming succinate and LL-2,6-diaminopimelate (DAP), an intermediate involved in the bacterial biosynthesis of lysine and meso-diaminopimelic acid, an essential component of bacterial cell walls. This Wolinella succinogenes (strain ATCC 29543 / DSM 1740 / CCUG 13145 / JCM 31913 / LMG 7466 / NCTC 11488 / FDC 602W) (Vibrio succinogenes) protein is Succinyl-diaminopimelate desuccinylase.